Consider the following 672-residue polypeptide: ABC transporter G family member 21 (672 aa).

The span at 1–35 (MMPPNEQESSFPKTPSANRHETSPVQENRFSSPSH) shows a compositional bias: polar residues. The interval 1–59 (MMPPNEQESSFPKTPSANRHETSPVQENRFSSPSHVNPCLDDDNDHDGPSHQSRQSSVL) is disordered. Low complexity predominate over residues 50–59 (SHQSRQSSVL). Residues 68–322 (LKFEELTYSI…FGSIGYQPGS (255 aa)) enclose the ABC transporter domain. 117-124 (GPSGSGKT) is a binding site for ATP. One can recognise an ABC transmembrane type-2 domain in the interval 411–617 (MQFSVLLKRG…CYKLLVGVQY (207 aa)). 6 consecutive transmembrane segments (helical) span residues 429-449 (FSGL…LLWW), 460-480 (VGLL…NAIF), 512-532 (LPME…MGGL), 543-563 (LMIV…LGAI), 576-596 (VLML…PGFI), and 649-669 (WDVL…YLAL).

Belongs to the ABC transporter superfamily. ABCG family. Eye pigment precursor importer (TC 3.A.1.204) subfamily.

The protein resides in the membrane. This is ABC transporter G family member 21 (ABCG21) from Arabidopsis thaliana (Mouse-ear cress).